The primary structure comprises 528 residues: Equilibrative nucleoside transporter 4 (528 aa).

Residues 1–68 (MGSIGSQRLK…EEPVPDDRYH (68 aa)) are Extracellular-facing. Residues 69-89 (AIYFAMLLAGVGFLLPYNSFI) traverse the membrane as a helical segment. Residues 90–101 (TDVDYLHHKYPG) lie on the Cytoplasmic side of the membrane. Residues 102–122 (TSIVFDMSLTYILVALAAVLL) form a helical membrane-spanning segment. At 123–139 (NNVVVERLNLHTRITTG) the chain is on the extracellular side. The helical transmembrane segment at 140 to 160 (YLLALGPLLFISICDVWLQLF) threads the bilayer. The Cytoplasmic portion of the chain corresponds to 161-166 (SHDQAY). A helical membrane pass occupies residues 167-187 (AINLAAVGTVAFGCTVQQSSF). The Extracellular segment spans residues 188 to 231 (YGYTGLLPKRYTQGVMTGESTAGVMISLSRILTKLLLPDERAST). Residues 232 to 252 (IIFFLVSAGLELLCFLLHLLV) traverse the membrane as a helical segment. Residues 253–346 (RRSRFVLYYT…LLLHRYVVAR (94 aa)) are Cytoplasmic-facing. Residues 347–367 (VIWADMLSIAVTYFITLCLFP) traverse the membrane as a helical segment. Residues 368-376 (GLESEIRHC) lie on the Extracellular side of the membrane. The chain crosses the membrane as a helical span at residues 377–397 (VLGEWLPILVMAVFNLSDFVG). Topologically, residues 398–411 (KILAALPVEWRGTH) are cytoplasmic. Residues 412 to 432 (LLACSCLRVVFIPLFILCVYP) traverse the membrane as a helical segment. The Extracellular segment spans residues 433–445 (SGMPALRHPAWPC). Residues 446–466 (VFSLLMGISNGYFGSVPMILA) form a helical membrane-spanning segment. At 467–481 (AGKVSPKQRELAGNT) the chain is on the cytoplasmic side. A helical transmembrane segment spans residues 482–504 (MTVSYMSGLTLGSAVAYCTYSLT). Residues 505 to 528 (RDAHGSCFQTATAAAANDSIPVGP) are Extracellular-facing. N521 carries an N-linked (GlcNAc...) asparagine glycan.

Belongs to the SLC29A/ENT transporter (TC 2.A.57) family. Post-translationally, N-glycosylated. Expressed in heart. Expressed in choroid plexus.

The protein localises to the cell membrane. It is found in the apical cell membrane. The catalysed reaction is serotonin(out) = serotonin(in). It carries out the reaction dopamine(out) = dopamine(in). The enzyme catalyses (R)-noradrenaline(out) = (R)-noradrenaline(in). It catalyses the reaction (R)-adrenaline(out) = (R)-adrenaline(in). The catalysed reaction is histamine(out) = histamine(in). It carries out the reaction tyramine(in) = tyramine(out). The enzyme catalyses guanidine(out) = guanidine(in). It catalyses the reaction adenine(out) = adenine(in). The catalysed reaction is adenosine(in) = adenosine(out). Activated at acidic pH. In terms of biological role, electrogenic voltage-dependent transporter that mediates the transport of a variety of endogenous bioactive amines, cationic xenobiotics and drugs. Utilizes the physiologic inside-negative membrane potential as a driving force to facilitate cellular uptake of organic cations. Functions as a Na(+)- and Cl(-)-independent bidirectional transporter. Substrate transport is pH-dependent and enhanced under acidic condition, which is most likely the result of allosteric changes in the transporter structure. Implicated in monoamine neurotransmitters uptake such as serotonin, dopamine, adrenaline/epinephrine, noradrenaline/norepinephrine, histamine and tyramine, thereby supporting a role in homeostatic regulation of aminergic neurotransmission in the central nervous system. Also responsible for the uptake of bioactive amines and drugs through the blood-cerebrospinal fluid (CSF) barrier, from the CSF into choroid plexus epithelial cells, thereby playing a significant role in the clearance of cationic neurotoxins, xenobiotics and metabolic waste in the brain. Involved in bidirectional transport of the purine nucleoside adenosine and plays a role in the regulation of extracellular adenosine concentrations in cardiac tissues, in particular during ischemia. May be involved in organic cation uptake from the tubular lumen into renal tubular cells, thereby contributing to organic cation reabsorption in the kidney. Also transports adenine and guanidine. The chain is Equilibrative nucleoside transporter 4 from Mus musculus (Mouse).